The chain runs to 274 residues: tRNA-cytidine(32) 2-sulfurtransferase (274 aa).

The PP-loop motif signature appears at 40-45 (SGGKDS). Cys-115, Cys-118, and Cys-206 together coordinate [4Fe-4S] cluster.

This sequence belongs to the TtcA family. As to quaternary structure, homodimer. Requires Mg(2+) as cofactor. [4Fe-4S] cluster serves as cofactor.

It is found in the cytoplasm. The enzyme catalyses cytidine(32) in tRNA + S-sulfanyl-L-cysteinyl-[cysteine desulfurase] + AH2 + ATP = 2-thiocytidine(32) in tRNA + L-cysteinyl-[cysteine desulfurase] + A + AMP + diphosphate + H(+). The protein operates within tRNA modification. Its function is as follows. Catalyzes the ATP-dependent 2-thiolation of cytidine in position 32 of tRNA, to form 2-thiocytidine (s(2)C32). The sulfur atoms are provided by the cysteine/cysteine desulfurase (IscS) system. The protein is tRNA-cytidine(32) 2-sulfurtransferase of Pseudomonas fluorescens (strain Pf0-1).